The sequence spans 220 residues: Acetate CoA-transferase subunit alpha (220 aa).

CoA is bound at residue 24–30 (GGFMGIG).

It belongs to the 3-oxoacid CoA-transferase subunit A family. As to quaternary structure, heterotetramer composed of two alpha subunits (AtoD) and two beta subunits (AtoA).

The protein localises to the cytoplasm. It catalyses the reaction an acyl-CoA + acetate = a carboxylate + acetyl-CoA. It carries out the reaction acetoacetate + acetyl-CoA = acetoacetyl-CoA + acetate. The enzyme catalyses butanoate + acetyl-CoA = butanoyl-CoA + acetate. The catalysed reaction is acetoacetate + butanoyl-CoA = acetoacetyl-CoA + butanoate. It functions in the pathway lipid metabolism; short-chain fatty acid metabolism. With respect to regulation, inhibited by p-chloromercuribenzoate. Functionally, coenzyme A transferase which is involved in short-chain fatty acid degradation and catalyzes the activation of short-chain fatty acids to their respective CoA thiolesters. During acetoacetate degradation, catalyzes the transfer of CoA from acetyl-CoA to acetoacetate by a mechanism involving a covalent enzyme-CoA compound as a reaction intermediate. Utilizes a variety of short chain acyl-CoA and carboxylic acid substrates but exhibits maximal activity with normal and 3-keto substrates. This chain is Acetate CoA-transferase subunit alpha, found in Escherichia coli (strain K12).